A 244-amino-acid polypeptide reads, in one-letter code: Small ribosomal subunit protein uS2 (244 aa).

Residues 224 to 244 (GQQGSDEAEEAEEAAEEVVAE) form a disordered region. Positions 229–244 (DEAEEAEEAAEEVVAE) are enriched in acidic residues.

It belongs to the universal ribosomal protein uS2 family.

This is Small ribosomal subunit protein uS2 from Desulfitobacterium hafniense (strain DSM 10664 / DCB-2).